We begin with the raw amino-acid sequence, 544 residues long: BTB/POZ domain-containing protein At2g13690 (544 aa).

Disordered regions lie at residues 34–66 (ASPDTRSISSRNHIPAKSQQQRPKLVPCSPQSS) and 82–111 (LSPGRVSPIDSDPTVTTMQETETTQEEEDD). The span at 37 to 55 (DTRSISSRNHIPAKSQQQR) shows a compositional bias: polar residues. A compositionally biased stretch (low complexity) spans 93-103 (DPTVTTMQETE). One can recognise a BTB domain in the interval 142 to 225 (YDARLSLKGR…MFEESNVIIK (84 aa)).

The protein operates within protein modification; protein ubiquitination. In terms of biological role, may act as a substrate-specific adapter of an E3 ubiquitin-protein ligase complex (CUL3-RBX1-BTB) which mediates the ubiquitination and subsequent proteasomal degradation of target proteins. This is BTB/POZ domain-containing protein At2g13690 (PRL1-IFG) from Arabidopsis thaliana (Mouse-ear cress).